The primary structure comprises 188 residues: MGGGWWWARAARLARLRFRRSLLPPQRPRSGGARGSFAPGHGPRAGASPPPVSELDRADAWLLRKAHETAFLSWFRNGLLASGIGVISFMQSDMGREAAYGFFLLGGLCVVWGSASYAVGLAALRGPMQLTLGGAAVGAGAVLAASLLWACAVGLYMGQLELDVELVPEDDGTASAEGPDEAGRPPPE.

The transit peptide at 1–96 (MGGGWWWARA…ISFMQSDMGR (96 aa)) directs the protein to the mitochondrion. The interval 24–52 (PPQRPRSGGARGSFAPGHGPRAGASPPPV) is disordered. Ser-48 is modified (phosphoserine). 2 helical membrane passes run 102 to 122 (FFLLGGLCVVWGSASYAVGLA) and 135 to 155 (AAVGAGAVLAASLLWACAVGL). A disordered region spans residues 168-188 (PEDDGTASAEGPDEAGRPPPE).

This sequence belongs to the TMEM160 family.

The protein resides in the mitochondrion inner membrane. The sequence is that of Transmembrane protein 160 from Homo sapiens (Human).